We begin with the raw amino-acid sequence, 417 residues long: UDP-N-acetylglucosamine 1-carboxyvinyltransferase (417 aa).

Residue 22-23 (KN) participates in phosphoenolpyruvate binding. Arg-92 serves as a coordination point for UDP-N-acetyl-alpha-D-glucosamine. Cys-116 functions as the Proton donor in the catalytic mechanism. 2-(S-cysteinyl)pyruvic acid O-phosphothioketal is present on Cys-116. UDP-N-acetyl-alpha-D-glucosamine-binding residues include Asp-304 and Val-326.

It belongs to the EPSP synthase family. MurA subfamily.

The protein localises to the cytoplasm. It carries out the reaction phosphoenolpyruvate + UDP-N-acetyl-alpha-D-glucosamine = UDP-N-acetyl-3-O-(1-carboxyvinyl)-alpha-D-glucosamine + phosphate. Its pathway is cell wall biogenesis; peptidoglycan biosynthesis. In terms of biological role, cell wall formation. Adds enolpyruvyl to UDP-N-acetylglucosamine. The polypeptide is UDP-N-acetylglucosamine 1-carboxyvinyltransferase (Syntrophotalea carbinolica (strain DSM 2380 / NBRC 103641 / GraBd1) (Pelobacter carbinolicus)).